Reading from the N-terminus, the 266-residue chain is tRNA (guanine-N(1)-)-methyltransferase (266 aa).

S-adenosyl-L-methionine-binding positions include G113 and 137–142 (LGDYVL).

It belongs to the RNA methyltransferase TrmD family. Homodimer.

The protein resides in the cytoplasm. It catalyses the reaction guanosine(37) in tRNA + S-adenosyl-L-methionine = N(1)-methylguanosine(37) in tRNA + S-adenosyl-L-homocysteine + H(+). Functionally, specifically methylates guanosine-37 in various tRNAs. The protein is tRNA (guanine-N(1)-)-methyltransferase of Paenarthrobacter aurescens (strain TC1).